The primary structure comprises 287 residues: MAEITAALVKELRERTGEGMMDCKKALTKAGGDIEKAIDDMRASGAIKAAKKAGNVAAEGAIALKEDGKSAVLLEVNSQTDFLALQDDFKAFVAASVEKAFADKLTDAAPLIEAQEADRLVLVGKVGENVNIRRLVRVEGDVVGGYLHGNKIGVAVVLKGGNVELAKDIAMHVAASNPEFLLPSEVSADAIEREKAVFLSLNADKIAGKPENIVENMIKGRISKFLAEASLVEQAFVKNPEIKVGELAKKAGAEIVSFTYFKVGEGIEKPVDNFAEEVAAQLAAAKQ.

Residues 80–83 form an involved in Mg(2+) ion dislocation from EF-Tu region; sequence TDFL.

This sequence belongs to the EF-Ts family.

Its subcellular location is the cytoplasm. In terms of biological role, associates with the EF-Tu.GDP complex and induces the exchange of GDP to GTP. It remains bound to the aminoacyl-tRNA.EF-Tu.GTP complex up to the GTP hydrolysis stage on the ribosome. The polypeptide is Elongation factor Ts (Pseudomonas fluorescens (strain SBW25)).